Here is a 325-residue protein sequence, read N- to C-terminus: Elongation factor P--(R)-beta-lysine ligase (325 aa).

76 to 78 lines the substrate pocket; that stretch reads SPE. ATP-binding positions include 100–102 and Asn-109; that span reads RNE. A substrate-binding site is contributed by Tyr-118. Residue 244 to 245 participates in ATP binding; sequence EL. Glu-251 contributes to the substrate binding site. Gly-300 lines the ATP pocket.

Belongs to the class-II aminoacyl-tRNA synthetase family. EpmA subfamily. Homodimer.

It catalyses the reaction D-beta-lysine + L-lysyl-[protein] + ATP = N(6)-((3R)-3,6-diaminohexanoyl)-L-lysyl-[protein] + AMP + diphosphate + H(+). In terms of biological role, with EpmB is involved in the beta-lysylation step of the post-translational modification of translation elongation factor P (EF-P) on 'Lys-34'. Catalyzes the ATP-dependent activation of (R)-beta-lysine produced by EpmB, forming a lysyl-adenylate, from which the beta-lysyl moiety is then transferred to the epsilon-amino group of EF-P 'Lys-34'. The protein is Elongation factor P--(R)-beta-lysine ligase of Escherichia coli O139:H28 (strain E24377A / ETEC).